Reading from the N-terminus, the 282-residue chain is Phosphatidylserine decarboxylase proenzyme (282 aa).

Residues Asp-88, His-144, and Ser-247 each act as charge relay system; for autoendoproteolytic cleavage activity in the active site. Ser-247 functions as the Schiff-base intermediate with substrate; via pyruvic acid; for decarboxylase activity in the catalytic mechanism. Position 247 is a pyruvic acid (Ser); by autocatalysis (Ser-247).

It belongs to the phosphatidylserine decarboxylase family. PSD-B subfamily. Prokaryotic type I sub-subfamily. Heterodimer of a large membrane-associated beta subunit and a small pyruvoyl-containing alpha subunit. The cofactor is pyruvate. Is synthesized initially as an inactive proenzyme. Formation of the active enzyme involves a self-maturation process in which the active site pyruvoyl group is generated from an internal serine residue via an autocatalytic post-translational modification. Two non-identical subunits are generated from the proenzyme in this reaction, and the pyruvate is formed at the N-terminus of the alpha chain, which is derived from the carboxyl end of the proenzyme. The autoendoproteolytic cleavage occurs by a canonical serine protease mechanism, in which the side chain hydroxyl group of the serine supplies its oxygen atom to form the C-terminus of the beta chain, while the remainder of the serine residue undergoes an oxidative deamination to produce ammonia and the pyruvoyl prosthetic group on the alpha chain. During this reaction, the Ser that is part of the protease active site of the proenzyme becomes the pyruvoyl prosthetic group, which constitutes an essential element of the active site of the mature decarboxylase.

Its subcellular location is the cell membrane. The catalysed reaction is a 1,2-diacyl-sn-glycero-3-phospho-L-serine + H(+) = a 1,2-diacyl-sn-glycero-3-phosphoethanolamine + CO2. Its pathway is phospholipid metabolism; phosphatidylethanolamine biosynthesis; phosphatidylethanolamine from CDP-diacylglycerol: step 2/2. Its function is as follows. Catalyzes the formation of phosphatidylethanolamine (PtdEtn) from phosphatidylserine (PtdSer). This is Phosphatidylserine decarboxylase proenzyme from Xanthomonas oryzae pv. oryzae (strain MAFF 311018).